Here is a 481-residue protein sequence, read N- to C-terminus: RuvB-like helicase 2 (481 aa).

76–83 (GPPSTGKT) contributes to the ATP binding site.

It belongs to the RuvB family. In terms of assembly, may form heterododecamers with hel-1/rvb1. Component of the SWR1 chromatin remodeling complex, the INO80 chromatin remodeling complex, and of the R2TP complex.

It is found in the nucleus. It catalyses the reaction ATP + H2O = ADP + phosphate + H(+). In terms of biological role, DNA helicase which participates in several chromatin remodeling complexes, including the SWR1 and the INO80 complexes. The SWR1 complex mediates the ATP-dependent exchange of histone H2A for the H2A variant H2A.Z leading to transcriptional regulation of selected genes by chromatin remodeling. The INO80 complex remodels chromatin by shifting nucleosomes and is involved in DNA repair. Also involved in pre-rRNA processing. The sequence is that of RuvB-like helicase 2 (hel-2) from Neurospora crassa (strain ATCC 24698 / 74-OR23-1A / CBS 708.71 / DSM 1257 / FGSC 987).